A 64-amino-acid polypeptide reads, in one-letter code: MSEETIVNCPTCGKNVVWGEQSPFRPFCSKRCQLIDLGEWAAEEKRIPSAGDLSDSDDWSEQQP.

The Zn(2+) site is built by C9, C12, C28, and C32. The segment at 45 to 64 is disordered; that stretch reads KRIPSAGDLSDSDDWSEQQP. Residues 54 to 64 are compositionally biased toward acidic residues; that stretch reads SDSDDWSEQQP.

It belongs to the DNA gyrase inhibitor YacG family. As to quaternary structure, interacts with GyrB. The cofactor is Zn(2+).

Functionally, inhibits all the catalytic activities of DNA gyrase by preventing its interaction with DNA. Acts by binding directly to the C-terminal domain of GyrB, which probably disrupts DNA binding by the gyrase. In Klebsiella pneumoniae (strain 342), this protein is DNA gyrase inhibitor YacG.